Here is a 145-residue protein sequence, read N- to C-terminus: Antiholin-like protein LrgA (145 aa).

The next 4 membrane-spanning stretches (helical) occupy residues 13–30, 40–62, 69–91, and 95–117; these read FFHQ…SKII, GSVI…LGEV, LTNN…LGVI, and PFLI…GYVT.

Belongs to the CidA/LrgA family. LrgA subfamily.

Its subcellular location is the cell membrane. Its function is as follows. Inhibits the expression or activity of extracellular murein hydrolases by interacting, possibly with LrgB, with the holin-like proteins CidA and/or CidB. The LrgAB and CidAB proteins may affect the proton motive force of the membrane. May be involved in programmed cell death (PCD), possibly triggering PCD in response to antibiotics and environmental stresses. This Staphylococcus aureus (strain MW2) protein is Antiholin-like protein LrgA.